Reading from the N-terminus, the 304-residue chain is Glutaminase (304 aa).

Residues Ser63, Asn114, Glu158, Asn165, Tyr189, Tyr240, and Val258 each coordinate substrate.

Belongs to the glutaminase family. In terms of assembly, homotetramer.

It carries out the reaction L-glutamine + H2O = L-glutamate + NH4(+). The protein is Glutaminase of Shewanella sp. (strain ANA-3).